Consider the following 506-residue polypeptide: U3 small nucleolar RNA-associated protein 18 homolog (506 aa).

A compositionally biased stretch (acidic residues) spans 1-11 (MSSDESSDGLE). Disordered stretches follow at residues 1-44 (MSSD…SQAK) and 69-126 (AKSV…PLNH). A compositionally biased stretch (basic and acidic residues) spans 24-37 (EQEKPAKIKRERYI). 4 positions are modified to phosphoserine: Ser-102, Ser-104, Ser-164, and Ser-165. WD repeat units follow at residues 203-242 (YAEG…NERL), 331-370 (KQEG…IEHI), 372-413 (MDDG…ASKA), and 469-505 (EKVG…YFKG).

Belongs to the WD repeat UTP18 family. As to quaternary structure, component of U3 snoRNP complex.

Its subcellular location is the nucleus. The protein localises to the nucleolus. Its function is as follows. Component of a nucleolar small nuclear ribonucleoprotein particle (snoRNP) thought to participate in the processing and modification of pre-ribosomal RNA. Regulation of cell size by ribosome synthesis is an important parameter for stem cell maintenance and function. The polypeptide is U3 small nucleolar RNA-associated protein 18 homolog (wcd) (Drosophila melanogaster (Fruit fly)).